Here is a 92-residue protein sequence, read N- to C-terminus: Small ribosomal subunit protein uS15c (92 aa).

The protein belongs to the universal ribosomal protein uS15 family. In terms of assembly, part of the 30S ribosomal subunit.

The protein resides in the plastid. It localises to the chloroplast. The sequence is that of Small ribosomal subunit protein uS15c (rps15-A) from Lemna minor (Common duckweed).